The sequence spans 419 residues: Structure-specific endonuclease subunit slx4 (419 aa).

This sequence belongs to the SLX4 family. As to quaternary structure, forms a heterodimer with slx1. Phosphorylated in response to DNA damage.

The protein resides in the nucleus. It localises to the nucleolus. Functionally, regulatory subunit of the slx1-slx4 structure-specific endonuclease that resolves DNA secondary structures generated during DNA repair and recombination. Has endonuclease activity towards branched DNA substrates, introducing single-strand cuts in duplex DNA close to junctions with ss-DNA. Has a preference for stem-loop (SL) and splayed arm Y structures. Introduces a single-strand cut in duplex DNA on the 3' side of a double-strand/single-strand junction with respect to the single-strand moving 3' to 5' away from the junction. Plays a critical role in maintaining the integrity of the ribosomal DNA (rDNA) loci, where it has a role in re-starting stalled replication forks. The complex initiates homologous recombination (HR) events, used to maintain rDNA copy number, in the rDNA repeats that are processed by a mechanism that requires rad22, but not rhp51. Has Holliday junction resolvase activity in vitro. Slx4 is required for efficient processing of DNA substrates. This is Structure-specific endonuclease subunit slx4 from Schizosaccharomyces pombe (strain 972 / ATCC 24843) (Fission yeast).